A 146-amino-acid chain; its full sequence is Putative pre-16S rRNA nuclease (146 aa).

It belongs to the YqgF nuclease family.

Its subcellular location is the cytoplasm. Could be a nuclease involved in processing of the 5'-end of pre-16S rRNA. In Pseudomonas syringae pv. tomato (strain ATCC BAA-871 / DC3000), this protein is Putative pre-16S rRNA nuclease.